Here is a 95-residue protein sequence, read N- to C-terminus: Exodeoxyribonuclease 7 small subunit (95 aa).

This sequence belongs to the XseB family. As to quaternary structure, heterooligomer composed of large and small subunits.

Its subcellular location is the cytoplasm. It catalyses the reaction Exonucleolytic cleavage in either 5'- to 3'- or 3'- to 5'-direction to yield nucleoside 5'-phosphates.. Functionally, bidirectionally degrades single-stranded DNA into large acid-insoluble oligonucleotides, which are then degraded further into small acid-soluble oligonucleotides. This is Exodeoxyribonuclease 7 small subunit from Corynebacterium aurimucosum (strain ATCC 700975 / DSM 44827 / CIP 107346 / CN-1) (Corynebacterium nigricans).